The sequence spans 132 residues: UPF0047 protein YugU (132 aa).

The protein belongs to the UPF0047 family.

The polypeptide is UPF0047 protein YugU (yugU) (Bacillus subtilis (strain 168)).